The primary structure comprises 150 residues: MSGSMATAEASGSDGKGQEVETSVTYYRMEEVAKRNSLKELWLVIHGRVYDVTRFLNEHPGGEEVLLEQAGVDASESFEDVGHSSDAREMLKQYYIGDIHPSDLKPENGSKDPSKNDTCKSCWAYWILPIIGAVLLGFLYRYYTPESKSS.

A propeptide spanning residues 1–15 (MSGSMATAEASGSDG) is cleaved from the precursor. Residues 1 to 21 (MSGSMATAEASGSDGKGQEVE) form a disordered region. Serine 23 carries the phosphoserine modification. A Cytochrome b5 heme-binding domain is found at 24–100 (VTYYRMEEVA…LKQYYIGDIH (77 aa)). An N6-acetyllysine modification is found at lysine 34. Phosphoserine is present on serine 37. Lysine 39 is modified (N6-methyllysine). Heme is bound by residues histidine 59 and histidine 83. Serine 84 carries the phosphoserine modification. Residues 122-144 (CWAYWILPIIGAVLLGFLYRYYT) form a helical membrane-spanning segment.

It belongs to the cytochrome b5 family. Component of a complex composed of cytochrome b5, NADH-cytochrome b5 reductase (CYB5R3) and MTARC2.

Its subcellular location is the mitochondrion outer membrane. In terms of biological role, cytochrome b5 is a membrane-bound hemoprotein functioning as an electron carrier for several membrane-bound oxygenases. This Pongo abelii (Sumatran orangutan) protein is Cytochrome b5 type B (CYB5B).